Consider the following 145-residue polypeptide: 3-dehydroquinate dehydratase (145 aa).

Tyr22 acts as the Proton acceptor in catalysis. Asn71, His77, and Asp84 together coordinate substrate. The active-site Proton donor is His97. Residues 98-99 (LS) and Arg108 contribute to the substrate site.

The protein belongs to the type-II 3-dehydroquinase family. As to quaternary structure, homododecamer.

It carries out the reaction 3-dehydroquinate = 3-dehydroshikimate + H2O. It functions in the pathway metabolic intermediate biosynthesis; chorismate biosynthesis; chorismate from D-erythrose 4-phosphate and phosphoenolpyruvate: step 3/7. In terms of biological role, catalyzes a trans-dehydration via an enolate intermediate. The sequence is that of 3-dehydroquinate dehydratase from Francisella tularensis subsp. mediasiatica (strain FSC147).